Here is a 403-residue protein sequence, read N- to C-terminus: S-adenosylmethionine synthase (403 aa).

Position 140–145 (140–145 (GKGSTD)) interacts with ATP.

Belongs to the AdoMet synthase 2 family. The cofactor is Mg(2+).

It catalyses the reaction L-methionine + ATP + H2O = S-adenosyl-L-methionine + phosphate + diphosphate. The protein operates within amino-acid biosynthesis; S-adenosyl-L-methionine biosynthesis; S-adenosyl-L-methionine from L-methionine: step 1/1. In terms of biological role, catalyzes the formation of S-adenosylmethionine from methionine and ATP. This Sulfolobus acidocaldarius (strain ATCC 33909 / DSM 639 / JCM 8929 / NBRC 15157 / NCIMB 11770) protein is S-adenosylmethionine synthase.